We begin with the raw amino-acid sequence, 223 residues long: Chalcone--flavanone isomerase 2 (223 aa).

3 residues coordinate substrate: Thr41, Asn106, and Ser183.

This sequence belongs to the chalcone isomerase family.

The enzyme catalyses a chalcone = a flavanone.. The protein operates within secondary metabolite biosynthesis; flavonoid biosynthesis. In terms of biological role, catalyzes the intramolecular cyclization of bicyclic chalcones into tricyclic (S)-flavanones. Responsible for the isomerization of 4,2',4',6'-tetrahydroxychalcone (also termed chalcone) into naringenin. The chain is Chalcone--flavanone isomerase 2 (CHI2) from Arabidopsis thaliana (Mouse-ear cress).